A 327-amino-acid polypeptide reads, in one-letter code: o-succinylbenzoate synthase (327 aa).

K110 serves as the catalytic Proton donor. Positions 138, 165, and 188 each coordinate Mg(2+). Residue K212 is the Proton acceptor of the active site.

This sequence belongs to the mandelate racemase/muconate lactonizing enzyme family. MenC type 1 subfamily. A divalent metal cation serves as cofactor.

It carries out the reaction (1R,6R)-6-hydroxy-2-succinyl-cyclohexa-2,4-diene-1-carboxylate = 2-succinylbenzoate + H2O. The protein operates within quinol/quinone metabolism; 1,4-dihydroxy-2-naphthoate biosynthesis; 1,4-dihydroxy-2-naphthoate from chorismate: step 4/7. Its pathway is quinol/quinone metabolism; menaquinone biosynthesis. Its function is as follows. Converts 2-succinyl-6-hydroxy-2,4-cyclohexadiene-1-carboxylate (SHCHC) to 2-succinylbenzoate (OSB). This is o-succinylbenzoate synthase from Mycobacterium ulcerans (strain Agy99).